Consider the following 161-residue polypeptide: Phosphopantetheine adenylyltransferase (161 aa).

Thr-9 contributes to the substrate binding site. ATP is bound by residues Thr-9 to Phe-10 and His-17. Positions 41, 73, and 87 each coordinate substrate. ATP contacts are provided by residues Gly-88–Arg-90, Glu-98, and Leu-123–Thr-129.

Belongs to the bacterial CoaD family. As to quaternary structure, homohexamer. Mg(2+) is required as a cofactor.

It is found in the cytoplasm. It carries out the reaction (R)-4'-phosphopantetheine + ATP + H(+) = 3'-dephospho-CoA + diphosphate. It participates in cofactor biosynthesis; coenzyme A biosynthesis; CoA from (R)-pantothenate: step 4/5. Reversibly transfers an adenylyl group from ATP to 4'-phosphopantetheine, yielding dephospho-CoA (dPCoA) and pyrophosphate. In Hahella chejuensis (strain KCTC 2396), this protein is Phosphopantetheine adenylyltransferase.